We begin with the raw amino-acid sequence, 152 residues long: UPF0178 protein SaurJH9_0705 (152 aa).

Belongs to the UPF0178 family.

This chain is UPF0178 protein SaurJH9_0705, found in Staphylococcus aureus (strain JH9).